A 655-amino-acid polypeptide reads, in one-letter code: Alpha-L-iduronidase (655 aa).

An N-terminal signal peptide occupies residues 1–25 (MRPPGPRAPGLALLAALLAAPRALA). Positions 53, 55, and 57 each coordinate alpha-D-mannopyranose. Residue histidine 90 coordinates alpha-L-iduronate. The N-linked (GlcNAc...) asparagine glycan is linked to asparagine 109. Positions 180 and 181 each coordinate alpha-L-iduronate. The active-site Proton donor is glutamate 181. Residues asparagine 189 and asparagine 242 are each glycosylated (N-linked (GlcNAc...) asparagine). 3 residues coordinate alpha-L-iduronate: lysine 263, glutamate 298, and glycine 304. Glutamate 298 serves as the catalytic Nucleophile. Tryptophan 305 serves as a coordination point for alpha-D-mannopyranose. The N-linked (GlcNAc...) asparagine glycan is linked to asparagine 335. Positions 348 and 362 each coordinate alpha-L-iduronate. Residues asparagine 371 and asparagine 414 are each glycosylated (N-linked (GlcNAc...) asparagine). Residues cysteine 540 and cysteine 576 are joined by a disulfide bond.

It belongs to the glycosyl hydrolase 39 family. Monomer. A smaller 63 kDa protein probably arises from IDUA protein by proteolytic cleavage. In terms of processing, N-glycosylation contributes to substrate binding and is required for full enzymatic activity. As to expression, detected in testis (at protein level). Expressed ubiquitously.

The protein resides in the lysosome. The enzyme catalyses Hydrolysis of unsulfated alpha-L-iduronosidic linkages in dermatan sulfate.. This Canis lupus familiaris (Dog) protein is Alpha-L-iduronidase (IDUA).